The chain runs to 99 residues: MGKNILLLLLGLSFVIGFLQALRCLECDMLNSDGICEKGNSTCEAKEDQECGILVVSQGVDILFGMQDCSSHCLNKTFHHYNLTLDFTCCHDQSLCNEF.

An N-terminal signal peptide occupies residues 1–21; the sequence is MGKNILLLLLGLSFVIGFLQA. In terms of domain architecture, UPAR/Ly6 spans 22-99; it reads LRCLECDMLN…CHDQSLCNEF (78 aa). Cystine bridges form between Cys-24-Cys-51, Cys-27-Cys-36, Cys-43-Cys-69, Cys-73-Cys-89, and Cys-90-Cys-96. Residue Asn-40 is glycosylated (N-linked (GlcNAc...) asparagine). Asn-75 and Asn-82 each carry an N-linked (GlcNAc...) asparagine glycan.

It belongs to the PATE family. In terms of assembly, monomer.

The protein resides in the secreted. The protein is Prostate and testis expressed protein 14 of Rattus norvegicus (Rat).